The following is a 366-amino-acid chain: MNKVVLLCRPGFEKECAAEITDKAGQREIFGFARVKENAGYVIYECYQPDDGDKLIRELPFSSLIFARQWFVVGELLQHLPPEDRITPIVGMLQGVVEKGGELRVEVADTNESKELLKFCRKFTVPLRAALRDAGVLANYETPKRPVVHVFFIAPGCCYTGYSYSNNNSPFYMGIPRLKFPADAPSRSTLKLEEAFHVFIPADEWDERLANGMWAVDLGACPGGWTYQLVKRNMWVYSVDNGPMAQSLMDTGQVTWLREDGFKFRPTRSNISWMVCDMVEKPAKVAALMAQWLVNGWCRETIFNLKLPMKKRYEEVSHNLAYIQAQLDEHGINAQIQARQLYHDREEVTVHVRRIWAAVGGRRDER.

Residues S188, 221-224 (CPGG), D240, D260, and D277 contribute to the S-adenosyl-L-methionine site. K306 serves as the catalytic Proton acceptor.

The protein belongs to the class I-like SAM-binding methyltransferase superfamily. RNA methyltransferase RlmE family. RlmM subfamily. Monomer.

Its subcellular location is the cytoplasm. It catalyses the reaction cytidine(2498) in 23S rRNA + S-adenosyl-L-methionine = 2'-O-methylcytidine(2498) in 23S rRNA + S-adenosyl-L-homocysteine + H(+). In terms of biological role, catalyzes the 2'-O-methylation at nucleotide C2498 in 23S rRNA. The polypeptide is Ribosomal RNA large subunit methyltransferase M (Escherichia coli O139:H28 (strain E24377A / ETEC)).